A 52-amino-acid chain; its full sequence is Ornatin-B (52 aa).

The Cell attachment site signature appears at 42–44 (RGD).

This sequence belongs to the ornatin family.

It is found in the secreted. Potent inhibitor of fibrinogen interaction with platelet receptors expressed on glycoprotein IIb-IIIa complex. May prevent blood from clotting during either feeding and/or storage of ingested blood. The protein is Ornatin-B of Placobdella ornata (Turtle leech).